The chain runs to 412 residues: Multifunctional CCA protein (412 aa).

ATP contacts are provided by glycine 8 and arginine 11. 2 residues coordinate CTP: glycine 8 and arginine 11. The Mg(2+) site is built by aspartate 21 and aspartate 23. Residues arginine 91, arginine 137, and arginine 140 each coordinate ATP. Residues arginine 91, arginine 137, and arginine 140 each contribute to the CTP site. The HD domain maps to 228–329 (TGIHTLMTLS…VKLFDSIDAW (102 aa)).

It belongs to the tRNA nucleotidyltransferase/poly(A) polymerase family. Bacterial CCA-adding enzyme type 1 subfamily. In terms of assembly, monomer. Can also form homodimers and oligomers. Mg(2+) serves as cofactor. Requires Ni(2+) as cofactor.

It carries out the reaction a tRNA precursor + 2 CTP + ATP = a tRNA with a 3' CCA end + 3 diphosphate. The catalysed reaction is a tRNA with a 3' CCA end + 2 CTP + ATP = a tRNA with a 3' CCACCA end + 3 diphosphate. Functionally, catalyzes the addition and repair of the essential 3'-terminal CCA sequence in tRNAs without using a nucleic acid template. Adds these three nucleotides in the order of C, C, and A to the tRNA nucleotide-73, using CTP and ATP as substrates and producing inorganic pyrophosphate. tRNA 3'-terminal CCA addition is required both for tRNA processing and repair. Also involved in tRNA surveillance by mediating tandem CCA addition to generate a CCACCA at the 3' terminus of unstable tRNAs. While stable tRNAs receive only 3'-terminal CCA, unstable tRNAs are marked with CCACCA and rapidly degraded. The chain is Multifunctional CCA protein from Escherichia coli O6:K15:H31 (strain 536 / UPEC).